The following is a 233-amino-acid chain: Membrane steroid-binding protein 2 (233 aa).

Residues Ala-23 to Val-43 traverse the membrane as a helical segment. The Cytochrome b5 heme-binding domain occupies Glu-70–Gln-167. The steroid-binding stretch occupies residues Glu-70 to Gln-167. 2 stretches are compositionally biased toward basic and acidic residues: residues Lys-169 to Glu-181 and Thr-202 to Ala-224. The disordered stretch occupies residues Lys-169–Glu-233. Residue Thr-225 is modified to Phosphothreonine.

The protein belongs to the cytochrome b5 family. MAPR subfamily.

The protein resides in the cell membrane. This is Membrane steroid-binding protein 2 (MSBP2) from Arabidopsis thaliana (Mouse-ear cress).